Reading from the N-terminus, the 1058-residue chain is Carbamoyl phosphate synthase large chain (1058 aa).

Residues 1–401 (MPKRTDIQKI…SLLKACRSLE (401 aa)) form a carboxyphosphate synthetic domain region. Residues R129, R169, G175, G176, R208, I210, E215, G241, I242, H243, Q284, and E298 each contribute to the ATP site. An ATP-grasp 1 domain is found at 133–327 (KQLMEELEQP…IAKLAAKIAV (195 aa)). Mg(2+) is bound by residues Q284, E298, and N300. Mn(2+) contacts are provided by Q284, E298, and N300. The tract at residues 402 to 546 (IGVHHNEIPE…YSTYGWENES (145 aa)) is oligomerization domain. The carbamoyl phosphate synthetic domain stretch occupies residues 547–929 (IRSDKESVLV…ALYKAFEASY (383 aa)). Residues 671–861 (EQALKELDIP…MAQVATKLIL (191 aa)) enclose the ATP-grasp 2 domain. Residues R707, S746, I748, E752, G777, V778, H779, S780, Q820, and E832 each contribute to the ATP site. Residues Q820, E832, and N834 each contribute to the Mg(2+) site. The Mn(2+) site is built by Q820, E832, and N834. In terms of domain architecture, MGS-like spans 930–1058 (LHLPTFGNVV…ESRSFVTEAI (129 aa)). The interval 930–1058 (LHLPTFGNVV…ESRSFVTEAI (129 aa)) is allosteric domain.

This sequence belongs to the CarB family. As to quaternary structure, composed of two chains; the small (or glutamine) chain promotes the hydrolysis of glutamine to ammonia, which is used by the large (or ammonia) chain to synthesize carbamoyl phosphate. Tetramer of heterodimers (alpha,beta)4. Requires Mg(2+) as cofactor. The cofactor is Mn(2+).

It carries out the reaction hydrogencarbonate + L-glutamine + 2 ATP + H2O = carbamoyl phosphate + L-glutamate + 2 ADP + phosphate + 2 H(+). It catalyses the reaction hydrogencarbonate + NH4(+) + 2 ATP = carbamoyl phosphate + 2 ADP + phosphate + 2 H(+). It participates in amino-acid biosynthesis; L-arginine biosynthesis; carbamoyl phosphate from bicarbonate: step 1/1. Its pathway is pyrimidine metabolism; UMP biosynthesis via de novo pathway; (S)-dihydroorotate from bicarbonate: step 1/3. In terms of biological role, large subunit of the glutamine-dependent carbamoyl phosphate synthetase (CPSase). CPSase catalyzes the formation of carbamoyl phosphate from the ammonia moiety of glutamine, carbonate, and phosphate donated by ATP, constituting the first step of 2 biosynthetic pathways, one leading to arginine and/or urea and the other to pyrimidine nucleotides. The large subunit (synthetase) binds the substrates ammonia (free or transferred from glutamine from the small subunit), hydrogencarbonate and ATP and carries out an ATP-coupled ligase reaction, activating hydrogencarbonate by forming carboxy phosphate which reacts with ammonia to form carbamoyl phosphate. The chain is Carbamoyl phosphate synthase large chain from Streptococcus pneumoniae (strain 70585).